A 252-amino-acid polypeptide reads, in one-letter code: Isoprenyl transferase 2 (252 aa).

Aspartate 26 is a catalytic residue. Residue aspartate 26 coordinates Mg(2+). Substrate is bound by residues 27–30 (GNGR), tryptophan 31, arginine 39, histidine 43, and 71–73 (SSE). Asparagine 74 acts as the Proton acceptor in catalysis. Residues tryptophan 75, arginine 77, arginine 194, and 200–202 (RLS) contribute to the substrate site. Residue glutamate 213 participates in Mg(2+) binding.

The protein belongs to the UPP synthase family. In terms of assembly, homodimer. The cofactor is Mg(2+).

In terms of biological role, catalyzes the condensation of isopentenyl diphosphate (IPP) with allylic pyrophosphates generating different type of terpenoids. This Bradyrhizobium diazoefficiens (strain JCM 10833 / BCRC 13528 / IAM 13628 / NBRC 14792 / USDA 110) protein is Isoprenyl transferase 2.